The primary structure comprises 1102 residues: MFAEDILRDYGSFISEHDGKLKLLRDKVPNRDVSESAQCVYMSPVVEVNFMGNDSMAPDRSFEESELVANKPLTTLANLCNQCRNLSRKAKRFQLAFLFSDFRLDDTLPPHTHTSEGSAGLEGSLVRMSSSMDFFCQVYFLLNRMIVILQNLWRQIAASVSVPMDINEVHIFAVFDAMSELLEHIVVFNELANQSKISTMWALYKKWLMNLSNSQSANLELNGLSTSLMDIENLITKDFFRILLDNLMELKKQFGLNSVSPITQHSNAYIRRQLLDVDANPSNELKNYEDPKHIIRLTTFVVVVHELGIQMEGKLVKNVIDLVARHKQVPLNRSVFWSPSGFLSLHAKTLMKSSARSQDGQGPKVHSTVLEKFRLSDQRTCRQLGVQLSLWSIQMQRVFDVGVFGHLKTFLQLILNGHSYADQVNLLAVALINRHVALMTPMTRNDWIVVSRLLQYLKVIQKTFESNQINFVRFISSLIQWQKQKVIHLLHTTKKKIVVLKLLQRKINFLATIKLAEKSIMGFPSKQRLTFVNLALGEFLDNRLLPADNQKLIKSILHRVNSISDIMRNIGGQLNTSESSSLVYNHWFLDTSVLKEYTELQRNPYSLQNLVSVSHHLDKIMAMFRGSRCPKQSANDLIIEFLSNHLEFFLRVEALSHLFQSQDQPFQQSALDYRLCINAVAVENDGDYNIIKDHLENYFTATFYNLTTIAPHDWKSYEKMRHLANKVLQLQPIDDHLPNQIIDQGIDVLQIMRNIHTFASSYAYNMNLQVFVETNSRSKHLDIIGTRHVANSVQTHGTGIINTTVNFIYQFLRQKFYTFSTFLHDEQIKSRLLKELRFHTEHKHSKSYQSYPYERADSFLKKIRRLGCSSNGETYMDLFRKVITQVGNAVGYVRLLQAGSKNANFRNRSYKTRFDSNFSCGGSKVHEATEGSIREYEKSLGHMKECYSDSTNYFKLLLQGFQPFLCNPHNHHLRTFYLITPALIMNYIDYRVKQKLKIYKKDQTKISLFEDGFAIGLVYILNMLNQQTEFHELGWSQTITQHLNAERSKVRDILAGQQRTAPEQLDEKLHQTVAITERHVNAYEHEYNLLYATLSSSEIFFQ.

The protein belongs to the SWIP family. In terms of assembly, component of the WASH complex.

It localises to the early endosome. Acts at least in part as component of the WASH complex which may regulate wash nucleation-promoting factor (NPF) activity and is required for its membrane targeting during endosomal sorting. During embryogenesis, not involved in the wash-dependent developmental migration of hemocytes anteriorly from the tail. This Drosophila melanogaster (Fruit fly) protein is WASH complex subunit 4.